The chain runs to 380 residues: uncharacterized protein (380 aa).

It belongs to the metallo-dependent hydrolases superfamily.

This is an uncharacterized protein from Methanocaldococcus jannaschii (strain ATCC 43067 / DSM 2661 / JAL-1 / JCM 10045 / NBRC 100440) (Methanococcus jannaschii).